A 212-amino-acid polypeptide reads, in one-letter code: N-(5'-phosphoribosyl)anthranilate isomerase (212 aa).

This sequence belongs to the TrpF family.

The catalysed reaction is N-(5-phospho-beta-D-ribosyl)anthranilate = 1-(2-carboxyphenylamino)-1-deoxy-D-ribulose 5-phosphate. It functions in the pathway amino-acid biosynthesis; L-tryptophan biosynthesis; L-tryptophan from chorismate: step 3/5. This chain is N-(5'-phosphoribosyl)anthranilate isomerase, found in Myxococcus xanthus (strain DK1622).